Here is a 904-residue protein sequence, read N- to C-terminus: MDDFTGLLARDFGLKPQGKSAPMASQSNSSAADFNTFASSYSFATAAGKKSDSLPVFDDPGRDGDDLLFKDVFSGPPPPKYGSSSGDSRSPSAPAFDYDAMFKEPKSKSASSMPVYDKPVYDDEDVFESIPELKIPSTSSQSARFENVFSSISSSPTKHRKQNSSPFDDLMGNNLGKKGADSDREEKGSSIFDDLIPGFGRTSSPPSKRTTSETTNQSEKAPYRTAETSSNVEEDPFVVLEESESTPREPSRTDPLDDIGKFNSRKTDHSSVHGGVFVDIDPLDNLGKPGPDMNSKGKSHLRPPGNISGSQSPPVESPGSYHSKKVSFEDFLEPHNMSTPPPTNSNGSFESSDDVWLTVSEIPLFTQPTSAPPPTRPPPPRPTRPIKKKVNEPSIPTSAYHSHVPSSGRASVNSPTASQMDELDDFSIGRNQTAANGYPDPSSGEDSDVFSTAAASAAAMKDAMDKAEAKFRHAKERREKENLKASRSREGDHTENYDSRERELREKQVRLDRERAEREAEMEKAQEREKEEREREQKRIERERERLVARQAVERATREARERAATEAHAKVQRAAVGKATDARERAERAAVQRAHAEARERAAAGARDKAAKAAAEAREKAEKAAAEAKERANAEAREKETRVRAERAAVERAAAEARGRAAAQAKAKQQQENTNDLDSFFSSISRPNSAPRQRTNPLDPFQDSWNKGGSFESSRESLRVPPGQPENLRKTSSVTNIVDDLSSIFGASASQSGGFQDVDGETEERRRARLERHQRTQERAAKALAEKNERDLQVQREQVEKDRIGVTLDVEIKRWGAGKEGNLRALLSTLQYVLWPECGWQPVSLTDLITAASVKKVYRKATLCIHPDKVQQKGANLQQKYIAEKVFDMLKEAWNKFNSEELF.

Disordered stretches follow at residues 46–99 (AAGK…FDYD), 150–731 (SSIS…NLRK), and 749–776 (SASQ…RHQR). Basic and acidic residues predominate over residues 59–69 (DPGRDGDDLLF). Low complexity predominate over residues 81–95 (YGSSSGDSRSPSAPA). The span at 178-188 (KGADSDREEKG) shows a compositional bias: basic and acidic residues. A compositionally biased stretch (low complexity) spans 201 to 215 (RTSSPPSKRTTSETT). A compositionally biased stretch (acidic residues) spans 232 to 244 (VEEDPFVVLEESE). Positions 245–271 (STPREPSRTDPLDDIGKFNSRKTDHSS) are enriched in basic and acidic residues. Residues 370–383 (SAPPPTRPPPPRPT) are compositionally biased toward pro residues. Residues 394-419 (SIPTSAYHSHVPSSGRASVNSPTASQ) show a composition bias toward polar residues. Positions 456 to 663 (SAAAMKDAMD…AAAEARGRAA (208 aa)) form a coiled coil. Basic and acidic residues-rich tracts occupy residues 462–570 (DAMD…EAHA) and 581–660 (TDAR…EARG). A R domain is found at 619 to 640 (REKAEKAAAEAKERANAEAREK). The segment covering 661 to 673 (RAAAQAKAKQQQE) has biased composition (low complexity). The span at 674–697 (NTNDLDSFFSSISRPNSAPRQRTN) shows a compositional bias: polar residues. Residues 762–804 (ETEERRRARLERHQRTQERAAKALAEKNERDLQVQREQVEKDR) adopt a coiled-coil conformation. The span at 764–776 (EERRRARLERHQR) shows a compositional bias: basic and acidic residues. The 66-residue stretch at 839–904 (CGWQPVSLTD…WNKFNSEELF (66 aa)) folds into the J domain.

As to quaternary structure, interacts with SH3P1.

Its subcellular location is the cell membrane. It localises to the golgi apparatus. The protein resides in the trans-Golgi network. The protein localises to the endoplasmic reticulum. It is found in the cytoplasmic vesicle. Promotes uncoating of clathrin-coated vesicles. May interact directly with clathrin. This chain is Auxilin-related protein 1, found in Arabidopsis thaliana (Mouse-ear cress).